The chain runs to 585 residues: Nucleus accumbens-associated protein 2 (585 aa).

Positions 30 to 94 constitute a BTB domain; sequence CDVSIVVKGQ…CYTGKLTMAA (65 aa). Residues K171 and K215 each participate in a glycyl lysine isopeptide (Lys-Gly) (interchain with G-Cter in SUMO2) cross-link. Polar residues predominate over residues 238-261; the sequence is PYPQGERTSPGASSLPTTDSSTSY. Residues 238-269 form a disordered region; sequence PYPQGERTSPGASSLPTTDSSTSYHNEDEDDD. Residues K296, K426, and K453 each participate in a glycyl lysine isopeptide (Lys-Gly) (interchain with G-Cter in SUMO2) cross-link. Positions 348–445 constitute a BEN domain; the sequence is GSGVYITRGQ…DMCTNARRVR (98 aa). The interval 541–585 is disordered; that stretch reads APEQLPADGQSSPQAFEQGNTSSSRPQTPVATATRRPEGTYAGTL. The segment covering 549-571 has biased composition (polar residues); the sequence is GQSSPQAFEQGNTSSSRPQTPVA.

As to quaternary structure, homooligomer; mediated by the BTB domain. Interacts with the NuRD complex. Interacts (via C-terminal part) with HDAC2. Interacts (via BTB domain) with MTA1, MTA2 and MTA3.

It localises to the nucleus. Its function is as follows. Functions as a transcriptional repressor through its association with the NuRD complex. Recruits the NuRD complex to the promoter of MDM2, leading to the repression of MDM2 transcription and subsequent stability of p53/TP53. This chain is Nucleus accumbens-associated protein 2 (Nacc2), found in Rattus norvegicus (Rat).